Consider the following 311-residue polypeptide: MSLSIIFMGTPEFSVPTLRLLADAGHRIVAVYTQPPRPGGRRGLDLQKSPVHQAAELLGLPVFTPVNFKDAEERERFAAFKADVAVVVAYGLLLPEAVLNGTRDGCYNGHASLLPRWRGAAPIQRAIMAGDEKTGMMVMKMDKGLDTGPVALSREVEIGPNMTAGELHDRLMQVGAKAMAEAMVKLEMNDLPLTPQPQDGVLYAAKIDKAETRIDFGRDARDVHNHIRGLAPFPGAWFELEIGGKPERVKVLGSELAEGQGTAGQLLTDDLLVGCASGAVRLTRLQKAGGKPLAAADFLRGTPLGAGTRLS.

112–115 (SLLP) is a (6S)-5,6,7,8-tetrahydrofolate binding site.

It belongs to the Fmt family.

It catalyses the reaction L-methionyl-tRNA(fMet) + (6R)-10-formyltetrahydrofolate = N-formyl-L-methionyl-tRNA(fMet) + (6S)-5,6,7,8-tetrahydrofolate + H(+). Attaches a formyl group to the free amino group of methionyl-tRNA(fMet). The formyl group appears to play a dual role in the initiator identity of N-formylmethionyl-tRNA by promoting its recognition by IF2 and preventing the misappropriation of this tRNA by the elongation apparatus. This chain is Methionyl-tRNA formyltransferase, found in Rhizobium etli (strain ATCC 51251 / DSM 11541 / JCM 21823 / NBRC 15573 / CFN 42).